The primary structure comprises 185 residues: Peptidyl-tRNA hydrolase (185 aa).

Y14 contacts tRNA. H19 serves as the catalytic Proton acceptor. Y64, N66, and N112 together coordinate tRNA.

This sequence belongs to the PTH family. Monomer.

The protein resides in the cytoplasm. It carries out the reaction an N-acyl-L-alpha-aminoacyl-tRNA + H2O = an N-acyl-L-amino acid + a tRNA + H(+). Its function is as follows. Hydrolyzes ribosome-free peptidyl-tRNAs (with 1 or more amino acids incorporated), which drop off the ribosome during protein synthesis, or as a result of ribosome stalling. Catalyzes the release of premature peptidyl moieties from peptidyl-tRNA molecules trapped in stalled 50S ribosomal subunits, and thus maintains levels of free tRNAs and 50S ribosomes. The sequence is that of Peptidyl-tRNA hydrolase from Ligilactobacillus salivarius (strain UCC118) (Lactobacillus salivarius).